A 489-amino-acid polypeptide reads, in one-letter code: GTPase Der (489 aa).

EngA-type G domains lie at 3–166 (PVVA…FDDV) and 201–374 (IKLA…DSST). Residues 9–16 (GRPNVGKS), 56–60 (DTGGI), 118–121 (NKTD), 207–214 (GRPNVGKS), 254–258 (DTAGV), and 319–322 (NKWD) each bind GTP. Residues 375–459 (KRISTSILTR…PIRIEFREGT (85 aa)) enclose the KH-like domain.

The protein belongs to the TRAFAC class TrmE-Era-EngA-EngB-Septin-like GTPase superfamily. EngA (Der) GTPase family. In terms of assembly, associates with the 50S ribosomal subunit.

Its function is as follows. GTPase that plays an essential role in the late steps of ribosome biogenesis. This chain is GTPase Der, found in Psychromonas ingrahamii (strain DSM 17664 / CCUG 51855 / 37).